Here is a 433-residue protein sequence, read N- to C-terminus: tRNA-2-methylthio-N(6)-dimethylallyladenosine synthase (433 aa).

One can recognise an MTTase N-terminal domain in the interval 4–119 (KKLFIQTLGC…ITQAIKTPKF (116 aa)). Cysteine 13, cysteine 50, cysteine 82, cysteine 151, cysteine 155, and cysteine 158 together coordinate [4Fe-4S] cluster. One can recognise a Radical SAM core domain in the interval 137–370 (RNSIYKSYIN…QNRHSEILDE (234 aa)). The 61-residue stretch at 373–433 (KKQENKTFKV…KRMVLYGEII (61 aa)) folds into the TRAM domain.

Belongs to the methylthiotransferase family. MiaB subfamily. In terms of assembly, monomer. The cofactor is [4Fe-4S] cluster.

It localises to the cytoplasm. It catalyses the reaction N(6)-dimethylallyladenosine(37) in tRNA + (sulfur carrier)-SH + AH2 + 2 S-adenosyl-L-methionine = 2-methylsulfanyl-N(6)-dimethylallyladenosine(37) in tRNA + (sulfur carrier)-H + 5'-deoxyadenosine + L-methionine + A + S-adenosyl-L-homocysteine + 2 H(+). In terms of biological role, catalyzes the methylthiolation of N6-(dimethylallyl)adenosine (i(6)A), leading to the formation of 2-methylthio-N6-(dimethylallyl)adenosine (ms(2)i(6)A) at position 37 in tRNAs that read codons beginning with uridine. This chain is tRNA-2-methylthio-N(6)-dimethylallyladenosine synthase, found in Campylobacter jejuni subsp. doylei (strain ATCC BAA-1458 / RM4099 / 269.97).